A 334-amino-acid polypeptide reads, in one-letter code: DNA-directed RNA polymerase subunit alpha (334 aa).

Positions 1 to 232 (MIREKLKVST…DLFIPFLHAE (232 aa)) are alpha N-terminal domain (alpha-NTD). The tract at residues 267–334 (QKEITLKSIF…NILQIENHFV (68 aa)) is alpha C-terminal domain (alpha-CTD).

This sequence belongs to the RNA polymerase alpha chain family. As to quaternary structure, in plastids the minimal PEP RNA polymerase catalytic core is composed of four subunits: alpha, beta, beta', and beta''. When a (nuclear-encoded) sigma factor is associated with the core the holoenzyme is formed, which can initiate transcription.

It is found in the plastid. Its subcellular location is the chloroplast. The enzyme catalyses RNA(n) + a ribonucleoside 5'-triphosphate = RNA(n+1) + diphosphate. Its function is as follows. DNA-dependent RNA polymerase catalyzes the transcription of DNA into RNA using the four ribonucleoside triphosphates as substrates. This is DNA-directed RNA polymerase subunit alpha from Pisum sativum (Garden pea).